A 27-amino-acid chain; its full sequence is Trypsin inhibitor 5 (27 aa).

3 cysteine pairs are disulfide-bonded: C1/C18, C8/C20, and C14/C26.

The protein resides in the secreted. Inhibits trypsin. The sequence is that of Trypsin inhibitor 5 from Sechium edule (Chayote).